Here is a 462-residue protein sequence, read N- to C-terminus: Chromosomal replication initiator protein DnaA (462 aa).

The tract at residues 1–86 is domain I, interacts with DnaA modulators; sequence MSLSLWQQCL…EVGNKPVSQN (86 aa). The segment at 86-125 is domain II; that stretch reads NDSPPQRVVTHTPVAPAPQNTSVRPSWDNTAVQPELSYRS. A domain III, AAA+ region region spans residues 126 to 342; the sequence is NVNPKHTFDN…GALNRVIANA (217 aa). 4 residues coordinate ATP: Gly170, Gly172, Lys173, and Thr174. A domain IV, binds dsDNA region spans residues 343–462; sequence NFTGRAITID…FSNLIRTLSS (120 aa).

The protein belongs to the DnaA family. In terms of assembly, oligomerizes as a right-handed, spiral filament on DNA at oriC.

It localises to the cytoplasm. Its function is as follows. Plays an essential role in the initiation and regulation of chromosomal replication. ATP-DnaA binds to the origin of replication (oriC) to initiate formation of the DNA replication initiation complex once per cell cycle. Binds the DnaA box (a 9 base pair repeat at the origin) and separates the double-stranded (ds)DNA. Forms a right-handed helical filament on oriC DNA; dsDNA binds to the exterior of the filament while single-stranded (ss)DNA is stabiized in the filament's interior. The ATP-DnaA-oriC complex binds and stabilizes one strand of the AT-rich DNA unwinding element (DUE), permitting loading of DNA polymerase. After initiation quickly degrades to an ADP-DnaA complex that is not apt for DNA replication. Binds acidic phospholipids. In Photorhabdus laumondii subsp. laumondii (strain DSM 15139 / CIP 105565 / TT01) (Photorhabdus luminescens subsp. laumondii), this protein is Chromosomal replication initiator protein DnaA.